A 283-amino-acid polypeptide reads, in one-letter code: Lolitrem B biosynthesis cluster protein S (283 aa).

A signal peptide spans 1-27; that stretch reads MSRSDWIFISLQGFFCLAGVIWKSREG. The next 5 helical transmembrane spans lie at 73 to 93, 112 to 132, 157 to 177, 219 to 239, and 250 to 270; these read WFWLHLMLYIAQLVGLILIIL, LGYLSYTVGLSTAFPVFSLWI, IFWCTGISHIGIFMVAIVATL, MTGTSSGFFLTVGLFSQALEA, and VRMFFVSLIAGPAAGSADVLL.

This sequence belongs to the ltmS family.

It localises to the membrane. Functionally, part of the gene cluster that mediates the biosynthesis of lolitrems, indole-diterpene mycotoxins that are potent tremorgens in mammals, and are synthesized by clavicipitaceous fungal endophytes in association with their grass hosts. The geranylgeranyl diphosphate (GGPP) synthase ltmG is proposed to catalyze the first step in lolitrem biosynthesis. LtmG catalyzes a series of iterative condensations of isopentenyl diphosphate (IPP) with dimethylallyl diphosphate (DMAPP), geranyl diphosphate (GPP), and farnesyl diphosphate (FPP), to form GGPP. GGPP then condenses with indole-3-glycerol phosphate to form 3-geranylgeranylindole, an acyclic intermediate, to be incorporated into paxilline. Either ltmG or ltmC could be responsible for this step, as both are putative prenyl transferases. The FAD-dependent monooxygenase ltmM then catalyzes the epoxidation of the two terminal alkenes of the geranylgeranyl moiety, which is subsequently cyclized by ltmB, to paspaline. The cytochrome P450 monooxygenases ltmQ and ltmP can sequentially oxidize paspaline to terpendole E and terpendole F. Alternatively, ltmP converts paspaline to an intermediate which is oxidized by ltmQ to terpendole F. LtmF, ltmK, ltmE and ltmJ appear to be unique to the epichloe endophytes. The prenyltransferase ltmF is involved in the 27-hydroxyl-O-prenylation. The cytochrome P450 monooxygenase ltmK is required for the oxidative acetal ring formation. The multi-functional prenyltransferase ltmE is required for C20- and C21-prenylations of the indole ring of paspalanes and acts together with the cytochrome P450 monooxygenase ltmJ to yield lolitremanes by multiple oxidations and ring closures. The stereoisomer pairs of lolitriol and lolitrem N or lolitrem B and lolitrem F may be attributed to variations in the way in which ring closure can occur under the action of ltmJ. While the major product of this pathway is lolitrem B, the prenyl transferases and cytochrome P450 monooxygenases identified in this pathway have a remarkable versatility in their regio- and stereo-specificities to generate a diverse range of metabolites that are products of a metabolic grid rather than a linear pathway. The polypeptide is Lolitrem B biosynthesis cluster protein S (Epichloe festucae (strain Fl1)).